A 995-amino-acid polypeptide reads, in one-letter code: DNA polymerase (995 aa).

Belongs to the DNA polymerase type-B family.

The enzyme catalyses DNA(n) + a 2'-deoxyribonucleoside 5'-triphosphate = DNA(n+1) + diphosphate. This Kluyveromyces lactis (strain ATCC 8585 / CBS 2359 / DSM 70799 / NBRC 1267 / NRRL Y-1140 / WM37) (Yeast) protein is DNA polymerase (RF1).